The following is a 439-amino-acid chain: Keratin, type I cytoskeletal 40 (439 aa).

A head region spans residues 1–89 (MASDGSPSCC…CEEGSFNSNE (89 aa)). Positions 89–400 (EKETMQFLND…GLLEKEDSRL (312 aa)) constitute an IF rod domain. The tract at residues 90-124 (KETMQFLNDRLASYLERVRSLEENNAELECRIREQ) is coil 1A. The tract at residues 125-135 (CEPNAPLVCPD) is linker 1. The coil 1B stretch occupies residues 136 to 236 (YQRYFDTIEE…HEEEVNLLRE (101 aa)). Positions 237 to 252 (QLGDRLSVELDTAPTV) are linker 12. The tract at residues 253-396 (DLNKVLDEMR…NTYRGLLEKE (144 aa)) is coil 2. The interval 397-439 (DSRLPCNPGSGAPMPNSTCEPCSNSMCEPCSAYVICTVENCCA) is tail.

It belongs to the intermediate filament family. In terms of assembly, heterotetramer of two type I and two type II keratins.

Its function is as follows. May play a role in late hair differentiation. The protein is Keratin, type I cytoskeletal 40 (Krt40) of Mus musculus (Mouse).